Here is a 621-residue protein sequence, read N- to C-terminus: Chaperone protein HscA homolog (621 aa).

The protein belongs to the heat shock protein 70 family.

Functionally, chaperone involved in the maturation of iron-sulfur cluster-containing proteins. Has a low intrinsic ATPase activity which is markedly stimulated by HscB. This Cupriavidus taiwanensis (strain DSM 17343 / BCRC 17206 / CCUG 44338 / CIP 107171 / LMG 19424 / R1) (Ralstonia taiwanensis (strain LMG 19424)) protein is Chaperone protein HscA homolog.